We begin with the raw amino-acid sequence, 574 residues long: Septation ring formation regulator EzrA (574 aa).

At Met1 to Ile7 the chain is on the extracellular side. The helical transmembrane segment at Leu8–Leu26 threads the bilayer. The Cytoplasmic portion of the chain corresponds to Arg27 to Phe574. Coiled-coil stretches lie at residues Leu104–Asn141, Asn267–Asn424, and Ala456–Glu524.

This sequence belongs to the EzrA family.

It localises to the cell membrane. Its function is as follows. Negative regulator of FtsZ ring formation; modulates the frequency and position of FtsZ ring formation. Inhibits FtsZ ring formation at polar sites. Interacts either with FtsZ or with one of its binding partners to promote depolymerization. This chain is Septation ring formation regulator EzrA, found in Streptococcus gordonii (strain Challis / ATCC 35105 / BCRC 15272 / CH1 / DL1 / V288).